The following is a 99-amino-acid chain: Large ribosomal subunit protein bL21 (99 aa).

It belongs to the bacterial ribosomal protein bL21 family. In terms of assembly, part of the 50S ribosomal subunit. Contacts protein L20.

Functionally, this protein binds to 23S rRNA in the presence of protein L20. The chain is Large ribosomal subunit protein bL21 from Neorickettsia sennetsu (strain ATCC VR-367 / Miyayama) (Ehrlichia sennetsu).